An 894-amino-acid polypeptide reads, in one-letter code: Bifunctional enzyme RhaA/RhaB (894 aa).

A rhamnulokinase region spans residues 1–465; sequence MGEYRLAVDI…TAFPVTYFLP (465 aa). The segment at 466–894 is L-rhamnose isomerase; sequence QRSESHVSSR…KRESEKAKQR (429 aa). Residues His-730, Asp-762, and Asp-764 each contribute to the Mn(2+) site.

This sequence in the N-terminal section; belongs to the rhamnulokinase family. In the C-terminal section; belongs to the rhamnose isomerase family. The cofactor is Mn(2+).

Its subcellular location is the cytoplasm. The enzyme catalyses L-rhamnulose + ATP = L-rhamnulose 1-phosphate + ADP + H(+). The catalysed reaction is L-rhamnopyranose = L-rhamnulose. It functions in the pathway carbohydrate degradation; L-rhamnose degradation; glycerone phosphate from L-rhamnose: step 1/3. The protein operates within carbohydrate degradation; L-rhamnose degradation; glycerone phosphate from L-rhamnose: step 2/3. The sequence is that of Bifunctional enzyme RhaA/RhaB (rhaAB) from Shouchella clausii (strain KSM-K16) (Alkalihalobacillus clausii).